The following is a 178-amino-acid chain: MTAPQEPVDPIQDAGVEAPDLQAEIDALRAELAAAQAQAQAHQEQALRAMAEAENVRRRAQEDVSKARKFGIESFAESLVPVKDSLEAALAQPEQTAQALREGVEVTLKQLNGAFERNMLKDIAPAQGDKFDPHLHQAISSVPAPQPANTVVQLLQKGYVIADRTLRPALVVVSAGQG.

The protein belongs to the GrpE family. As to quaternary structure, homodimer.

Its subcellular location is the cytoplasm. Its function is as follows. Participates actively in the response to hyperosmotic and heat shock by preventing the aggregation of stress-denatured proteins, in association with DnaK and GrpE. It is the nucleotide exchange factor for DnaK and may function as a thermosensor. Unfolded proteins bind initially to DnaJ; upon interaction with the DnaJ-bound protein, DnaK hydrolyzes its bound ATP, resulting in the formation of a stable complex. GrpE releases ADP from DnaK; ATP binding to DnaK triggers the release of the substrate protein, thus completing the reaction cycle. Several rounds of ATP-dependent interactions between DnaJ, DnaK and GrpE are required for fully efficient folding. The sequence is that of Protein GrpE from Bordetella avium (strain 197N).